Reading from the N-terminus, the 83-residue chain is Putative snRNP Sm-like protein (83 aa).

The Sm domain occupies 9 to 81; sequence KPMDVLKNAL…VIFVSPSKGD (73 aa).

The protein belongs to the snRNP Sm proteins family.

The chain is Putative snRNP Sm-like protein from Thermoplasma volcanium (strain ATCC 51530 / DSM 4299 / JCM 9571 / NBRC 15438 / GSS1).